Here is a 198-residue protein sequence, read N- to C-terminus: Inositol diphosphatase DSP4 (198 aa).

Positions 1-23 (MTLESYAGDVHTVPQSENSMEER) are disordered. In terms of domain architecture, Tyrosine-protein phosphatase spans 34 to 188 (NFAMVDNGIF…LKHTPLSFSC (155 aa)). The tract at residues 90-102 (FGIERCKEPFVNI) is WPD loop important for active site topology. 1D-myo-inositol hexakisphosphate-binding residues include Asn101 and Ile102. Residue Cys126 is the Phosphocysteine intermediate of the active site.

The protein belongs to the protein-tyrosine phosphatase family. Atypical dual-specificity phosphatase Siw14-like subfamily. Highly expressed in flowers and at lower levels in roots, leaves, stems and siliques.

The enzyme catalyses 5-diphospho-1D-myo-inositol 1,2,3,4,6-pentakisphosphate + H2O = 1D-myo-inositol hexakisphosphate + phosphate + H(+). The catalysed reaction is 1,5-bis(diphospho)-1D-myo-inositol 2,3,4,6-tetrakisphosphate + H2O = 1-diphospho-1D-myo-inositol 2,3,4,5,6-pentakisphosphate + phosphate + 2 H(+). It carries out the reaction 3,5-bis(diphospho)-1D-myo-inositol 1,2,4,6-tetrakisphosphate + H2O = 3-diphospho-1D-myo-inositol 1,2,4,5,6-pentakisphosphate + phosphate + 2 H(+). It catalyses the reaction 6-diphospho-1D-myo-inositol pentakisphosphate + H2O = 1D-myo-inositol hexakisphosphate + phosphate + H(+). Functionally, cleaves the beta-phosphate at the 5-position of soluble inositol pyrophosphates. Has highest activity on 5-diphosphoinositol 1,2,3,4,6-pentakisphosphate (5-InsP(7)), 1,5-bis-diphosphoinositol 2,3,4,6-tetrakisphosphate (1,5-InsP(8)) and 3,5-InsP(8). Acts as a negative regulator of defense responses against the bacterial pathogen Pseudomonas syringae pv tomato strain DC3000. The protein is Inositol diphosphatase DSP4 of Arabidopsis thaliana (Mouse-ear cress).